A 337-amino-acid chain; its full sequence is Probable allantoicase 1 (337 aa).

This sequence belongs to the allantoicase family.

It catalyses the reaction allantoate + H2O = (S)-ureidoglycolate + urea. It participates in nitrogen metabolism; (S)-allantoin degradation; (S)-ureidoglycolate from allantoate (aminidohydrolase route): step 1/1. The polypeptide is Probable allantoicase 1 (Burkholderia mallei (strain ATCC 23344)).